The primary structure comprises 185 residues: Bcl-2-modifying factor (185 aa).

Residues 1–28 (MEPPQCVEELEDDVFQSEDGEPGTQPGG) are disordered. The span at 8–21 (EELEDDVFQSEDGE) shows a compositional bias: acidic residues. The interaction with DLC2 stretch occupies residues 67 to 75 (DKATQTLSP). The short motif at 134–148 (IARKLQCIADQFHRL) is the BH3 element.

Belongs to the Bcl-2 family. In terms of assembly, interacts with MCL1, BCL2, BCL2L1/BCL-Xl, BCL2A1 and BCL2L2/BCL-w. Interacts with the myosin V actin motor complex through its binding to DLC2. As to expression, widely expressed with an abundant expression in pancreas, liver kidney and hematopoietic tissues.

May play a role in apoptosis. The polypeptide is Bcl-2-modifying factor (Bmf) (Mus musculus (Mouse)).